Here is a 388-residue protein sequence, read N- to C-terminus: tRNA (guanine(26)-N(2))-dimethyltransferase (388 aa).

Residues 4 to 383 (RTIVEGTTKI…APIAEIKKII (380 aa)) enclose the Trm1 methyltransferase domain. S-adenosyl-L-methionine-binding residues include Arg41, Arg78, Asp94, and Ala123. The Zn(2+) site is built by Cys251, Cys254, Cys271, and Cys274.

It belongs to the class I-like SAM-binding methyltransferase superfamily. Trm1 family.

It carries out the reaction guanosine(26) in tRNA + 2 S-adenosyl-L-methionine = N(2)-dimethylguanosine(26) in tRNA + 2 S-adenosyl-L-homocysteine + 2 H(+). Its function is as follows. Dimethylates a single guanine residue at position 26 of a number of tRNAs using S-adenosyl-L-methionine as donor of the methyl groups. The sequence is that of tRNA (guanine(26)-N(2))-dimethyltransferase from Methanosarcina mazei (strain ATCC BAA-159 / DSM 3647 / Goe1 / Go1 / JCM 11833 / OCM 88) (Methanosarcina frisia).